A 919-amino-acid polypeptide reads, in one-letter code: Plasma membrane ATPase 1 (919 aa).

Residues 1–16 (MADNAGEYHDAEKHAP) show a composition bias toward basic and acidic residues. Residues 1-73 (MADNAGEYHD…APAAGEAKAV (73 aa)) are disordered. Topologically, residues 1-113 (MADNAGEYHD…KEELENPFLK (113 aa)) are cytoplasmic. A compositionally biased stretch (acidic residues) spans 34–63 (QDDEPDDDIDALIEELFSEDVQEEQEDNDD). Residue Ser89 is modified to Phosphoserine. The helical transmembrane segment at 114 to 134 (FIMFFVGPIQFVMEMAAALAA) threads the bilayer. Residues 135–138 (GLRD) are Extracellular-facing. A helical membrane pass occupies residues 139–158 (WVDFGVICALLMLNAVVGFV). Residues 159 to 289 (QEYQAGSIVD…GTGHFTEVLN (131 aa)) are Cytoplasmic-facing. A helical membrane pass occupies residues 290–311 (GIGTILLVLVLLTLFCIYTAAF). The Extracellular segment spans residues 312–322 (YRSVRLARLLE). The helical transmembrane segment at 323–345 (YTLAITIIGVPVGLPAVVTTTMA) threads the bilayer. At 346 to 717 (VGAAYLAEKQ…LIIRNQLLNL (372 aa)) the chain is on the cytoplasmic side. The active-site 4-aspartylphosphate intermediate is the Asp376. Ser494 is modified (phosphoserine). Mg(2+) is bound by residues Asp632 and Asp636. Residues 718 to 736 (ELVVFIAIFADVATLAIAY) form a helical membrane-spanning segment. Residues 737 to 752 (DNAPYSMKPVKWNLPR) are Extracellular-facing. Residues 753 to 772 (LWGLSTVIGIVLAIGTWITN) form a helical membrane-spanning segment. Over 773–824 (TTMIAQGQNRGIVQNFGVQDEVLFLEISLTENWLIFVTRCNGPFWSSIPSWQ) the chain is Cytoplasmic. A helical transmembrane segment spans residues 825 to 845 (LSGAVLAVDILATMFCIFGWF). Residues 846–858 (KGGHQTSIVAVLR) lie on the Extracellular side of the membrane. A helical membrane pass occupies residues 859–875 (IWMYSFGIFCIMAGTYY). The Cytoplasmic segment spans residues 876-919 (ILSESAGFDRMMNGKPKESRNQRSIEDLVVALQRTSTRHEKGDA). Ser899 carries the phosphoserine modification.

Belongs to the cation transport ATPase (P-type) (TC 3.A.3) family. Type IIIA subfamily.

It is found in the cell membrane. The catalysed reaction is ATP + H2O + H(+)(in) = ADP + phosphate + 2 H(+)(out). Functionally, the plasma membrane ATPase of plants and fungi is a hydrogen ion pump. The proton gradient it generates drives the active transport of nutrients by H(+)-symport. The resulting external acidification and/or internal alkinization may mediate growth responses. In Schizosaccharomyces pombe (strain 972 / ATCC 24843) (Fission yeast), this protein is Plasma membrane ATPase 1 (pma1).